Here is a 603-residue protein sequence, read N- to C-terminus: Glutamyl-tRNA(Gln) amidotransferase subunit B, mitochondrial (603 aa).

A mitochondrion-targeting transit peptide spans 1–32 (MIRHRLRLALSAAPVTATGRRTRSKTAPRRSL). A disordered region spans residues 12–59 (AAPVTATGRRTRSKTAPRRSLSTQQTQSSASSSSNNLDGDGRAFVPLR). Residues 31-48 (SLSTQQTQSSASSSSNNL) show a composition bias toward low complexity.

The protein belongs to the GatB/GatE family. GatB subfamily. Subunit of the heterotrimeric GatCAB amidotransferase (AdT) complex, composed of A, B and C subunits.

Its subcellular location is the mitochondrion. It catalyses the reaction L-glutamyl-tRNA(Gln) + L-glutamine + ATP + H2O = L-glutaminyl-tRNA(Gln) + L-glutamate + ADP + phosphate + H(+). In terms of biological role, allows the formation of correctly charged Gln-tRNA(Gln) through the transamidation of misacylated Glu-tRNA(Gln) in the mitochondria. The reaction takes place in the presence of glutamine and ATP through an activated gamma-phospho-Glu-tRNA(Gln). This is Glutamyl-tRNA(Gln) amidotransferase subunit B, mitochondrial from Arthroderma otae (strain ATCC MYA-4605 / CBS 113480) (Microsporum canis).